The sequence spans 616 residues: Carboxylic acid transporter protein homolog (616 aa).

The segment covering 1–11 (MSSSITDEKIS) has biased composition (basic and acidic residues). A disordered region spans residues 1-65 (MSSSITDEKI…LYHNPSLPAQ (65 aa)). Ser2 carries the N-acetylserine modification. The Cytoplasmic segment spans residues 2–140 (SSSITDEKIS…LRKMTWQNWN (139 aa)). The residue at position 4 (Ser4) is a Phosphoserine. A Glycyl lysine isopeptide (Lys-Gly) (interchain with G-Cter in ubiquitin) cross-link involves residue Lys9. Phosphoserine is present on residues Ser11, Ser61, and Ser66. Thr70 bears the Phosphothreonine mark. The chain crosses the membrane as a helical span at residues 141–161 (YFFMGYFAWLSAAWAFFCVSV). At 162-176 (SVAPLAELYDRPTKD) the chain is on the extracellular side. A helical transmembrane segment spans residues 177–197 (ITWGLGLVLFVRSAGAVIFGL). Residues 198–205 (WTDKSSRK) are Cytoplasmic-facing. A helical membrane pass occupies residues 206 to 226 (WPYITCLFLFVIAQLCTPWCD). Residues 227 to 230 (TYEK) are Extracellular-facing. The chain crosses the membrane as a helical span at residues 231 to 251 (FLGVRWITGIAMGGIYGCASA). Residues 252–263 (TAIEDAPVKARS) lie on the Cytoplasmic side of the membrane. The helical transmembrane segment at 264–284 (FLSGLFFSAYAMGFIFAIIFY) threads the bilayer. At 285–296 (RAFGYFRDDGWK) the chain is on the extracellular side. The chain crosses the membrane as a helical span at residues 297–317 (ILFWFSIFLPILLIFWRLLWP). The Cytoplasmic portion of the chain corresponds to 318–363 (ETKYFTKVLKARKLILSDAVKANGGEPLPKANFKQKMVSMKRTVQK). Residue Lys338 forms a Glycyl lysine isopeptide (Lys-Gly) (interchain with G-Cter in ubiquitin) linkage. The helical transmembrane segment at 364 to 384 (YWLLFAYLVVLLVGPNYLTHA) threads the bilayer. The Extracellular segment spans residues 385 to 402 (SQDLLPTMLRAQLGLSKD). Residues 403–423 (AVTVIVVVTNIGAICGGMIFG) traverse the membrane as a helical segment. The Cytoplasmic portion of the chain corresponds to 424-432 (QFMEVTGRR). A helical membrane pass occupies residues 433–453 (LGLLIACTMGGCFTYPAFMLR). The Extracellular segment spans residues 454-457 (SEKA). A helical transmembrane segment spans residues 458 to 478 (ILGAGFMLYFCVFGVWGILPI). At 479–489 (HLAELAPADAR) the chain is on the cytoplasmic side. The chain crosses the membrane as a helical span at residues 490-510 (ALVAGLSYQLGNLASAAASTI). Over 511–535 (ETQLADRYPLERDASGAVIKEDYAK) the chain is Extracellular. A helical membrane pass occupies residues 536-556 (VMAILTGSVFIFTFACVFVGH). Topologically, residues 557 to 616 (EKFHRDLSSPVMKKYINQVEEYEADGLSISDIVEQKTECASVKMIDSNVSKTYEEHIETV) are cytoplasmic. Phosphoserine occurs at positions 584, 603, and 606.

It belongs to the major facilitator superfamily. Sugar transporter (TC 2.A.1.1) family.

It is found in the membrane. Its function is as follows. Essential to lactate transport. The polypeptide is Carboxylic acid transporter protein homolog (JEN1) (Saccharomyces cerevisiae (strain ATCC 204508 / S288c) (Baker's yeast)).